A 133-amino-acid polypeptide reads, in one-letter code: Small ribosomal subunit protein eS8 (133 aa).

A disordered region spans residues M1–D22.

It belongs to the eukaryotic ribosomal protein eS8 family. In terms of assembly, part of the 30S ribosomal subunit.

This chain is Small ribosomal subunit protein eS8, found in Saccharolobus islandicus (strain Y.N.15.51 / Yellowstone #2) (Sulfolobus islandicus).